The chain runs to 337 residues: Tryptophan--tRNA ligase (337 aa).

Residues 9 to 11 (RPT) and 17 to 18 (GH) contribute to the ATP site. The 'HIGH' region motif lies at 10–18 (PTGRLHLGH). Asp137 serves as a coordination point for L-tryptophan. ATP-binding positions include 149 to 151 (GKD), Leu187, and 195 to 199 (KMSKS). Positions 195 to 199 (KMSKS) match the 'KMSKS' region motif.

Belongs to the class-I aminoacyl-tRNA synthetase family. Homodimer.

The protein resides in the cytoplasm. It catalyses the reaction tRNA(Trp) + L-tryptophan + ATP = L-tryptophyl-tRNA(Trp) + AMP + diphosphate + H(+). Its function is as follows. Catalyzes the attachment of tryptophan to tRNA(Trp). The sequence is that of Tryptophan--tRNA ligase from Treponema pallidum (strain Nichols).